Reading from the N-terminus, the 793-residue chain is Nuclear cap-binding protein subunit 1 (793 aa).

Residues 28–242 form the MIF4G domain; sequence EKKLQEVIGK…SLSAQIENLR (215 aa).

The protein belongs to the NCBP1 family. As to quaternary structure, component of the nuclear cap-binding complex (CBC), a heterodimer composed of ncbp-1 and ncbp-1 that interacts with m7GpppG-capped RNA.

It is found in the nucleus. In terms of biological role, component of the cap-binding complex (CBC), which binds cotranscriptionally to the 5'-cap of pre-mRNAs and is involved in various processes such as pre-mRNA splicing and RNA-mediated gene silencing (RNAi). The CBC complex is involved in miRNA-mediated RNA interference and is required for primary microRNAs (miRNAs) processing. In the CBC complex, ncbp-1 does not bind directly capped RNAs (m7GpppG-capped RNA) but is required to stabilize the movement of the N-terminal loop of ncbp-2 and lock the CBC into a high affinity cap-binding state with the cap structure. The protein is Nuclear cap-binding protein subunit 1 (ncbp-1) of Caenorhabditis briggsae.